An 892-amino-acid polypeptide reads, in one-letter code: Alpha-actinin-1 (892 aa).

Methionine 1 is modified (N-acetylmethionine). The segment at 1–247 (MDHYDSQQTN…IMTYVSSFYH (247 aa)) is actin-binding. Position 6 is a phosphoserine (serine 6). Tyrosine 12 is modified (phosphotyrosine; by FAK1). Calponin-homology (CH) domains lie at 31-135 (KQQR…LRFA) and 144-250 (TSAK…HAFS). Lysine 95 and lysine 195 each carry N6-acetyllysine. 4 Spectrin repeats span residues 274 to 384 (QLME…WLLN), 394 to 499 (HLAE…ALER), 509 to 620 (QLYL…ALTE), and 630 to 733 (RLRK…EVEN). Residues 274–733 (QLMEDYEKLA…IARTINEVEN (460 aa)) form an interaction with DDN region. At serine 471 the chain carries Phosphoserine. Residue lysine 676 is modified to N6-acetyllysine. Residue serine 677 is modified to Phosphoserine. EF-hand domains are found at residues 746-781 (EQMN…LGYD) and 787-822 (QGEA…ETAD). Ca(2+)-binding residues include aspartate 759, aspartate 761, serine 763, threonine 765, and glutamate 770. Serine 890 bears the Phosphoserine mark.

It belongs to the alpha-actinin family. In terms of assembly, homodimer; antiparallel. Interacts with MYOZ2, TTID and LPP. Interacts with DDN. Interacts with PSD. Interacts with MICALL2. Interacts with DNM2 and CTTN. Interacts with PDLIM1. Interacts with PDLIM2. Interacts with PDLIM4 (via PDZ domain). Interacts with IGSF8.

Its subcellular location is the cytoplasm. It is found in the cytoskeleton. The protein resides in the myofibril. The protein localises to the sarcomere. It localises to the z line. Its subcellular location is the cell membrane. It is found in the cell junction. The protein resides in the cell projection. The protein localises to the ruffle. F-actin cross-linking protein which is thought to anchor actin to a variety of intracellular structures. Association with IGSF8 regulates the immune synapse formation and is required for efficient T-cell activation. This Rattus norvegicus (Rat) protein is Alpha-actinin-1 (Actn1).